The sequence spans 125 residues: Large ribosomal subunit protein bL12 (125 aa).

This sequence belongs to the bacterial ribosomal protein bL12 family. As to quaternary structure, homodimer. Part of the ribosomal stalk of the 50S ribosomal subunit. Forms a multimeric L10(L12)X complex, where L10 forms an elongated spine to which 2 to 4 L12 dimers bind in a sequential fashion. Binds GTP-bound translation factors.

Forms part of the ribosomal stalk which helps the ribosome interact with GTP-bound translation factors. Is thus essential for accurate translation. The sequence is that of Large ribosomal subunit protein bL12 from Gluconacetobacter diazotrophicus (strain ATCC 49037 / DSM 5601 / CCUG 37298 / CIP 103539 / LMG 7603 / PAl5).